The primary structure comprises 144 residues: Large ribosomal subunit protein uL15 (144 aa).

The tract at residues 1 to 51 (MRLNTLSPAEGAKHSAKRLGRGIGSGLGKTGGRGHKGQKSRTGGKVRRGFE) is disordered. Gly residues predominate over residues 21-31 (RGIGSGLGKTG). The span at 32–47 (GRGHKGQKSRTGGKVR) shows a compositional bias: basic residues.

This sequence belongs to the universal ribosomal protein uL15 family. As to quaternary structure, part of the 50S ribosomal subunit.

Functionally, binds to the 23S rRNA. This chain is Large ribosomal subunit protein uL15, found in Actinobacillus succinogenes (strain ATCC 55618 / DSM 22257 / CCUG 43843 / 130Z).